The primary structure comprises 261 residues: Cytochrome c oxidase subunit 3 (261 aa).

Residues 1 to 15 (MTHQTHAYHMVNPSP) lie on the Mitochondrial matrix side of the membrane. A helical membrane pass occupies residues 16–34 (WPLTGALSALLMTSGLIMW). The Mitochondrial intermembrane segment spans residues 35–40 (FHFNST). Residues 41 to 66 (ILLMLGLTTNMLTMYQWWRDVIREST) form a helical membrane-spanning segment. Residues 67 to 72 (FQGHHT) are Mitochondrial matrix-facing. A helical transmembrane segment spans residues 73-105 (PNVQKGLRYGMILFIISEVLFFTGFFWAFYHSS). The Mitochondrial intermembrane portion of the chain corresponds to 106-128 (LAPTPELGGCWPPTGIHPLNPLE). The helical transmembrane segment at 129–152 (VPLLNTSVLLASGVSITWAHHSLM) threads the bilayer. Residues 153 to 155 (EGN) are Mitochondrial matrix-facing. A helical membrane pass occupies residues 156-183 (RNHMLQALFITIALGVYFTLLQASEYYE). The Mitochondrial intermembrane segment spans residues 184 to 190 (APFTISD). A helical transmembrane segment spans residues 191–223 (GVYGSTFFVATGFHGLHVIIGSTFLIVCFFRQL). Topologically, residues 224–232 (KFHFTSNHH) are mitochondrial matrix. A helical transmembrane segment spans residues 233–256 (FGFEAAAWYWHFVDVVWLFLYVSI). The Mitochondrial intermembrane segment spans residues 257-261 (YWWGS).

It belongs to the cytochrome c oxidase subunit 3 family. In terms of assembly, component of the cytochrome c oxidase (complex IV, CIV), a multisubunit enzyme composed of 14 subunits. The complex is composed of a catalytic core of 3 subunits MT-CO1, MT-CO2 and MT-CO3, encoded in the mitochondrial DNA, and 11 supernumerary subunits COX4I, COX5A, COX5B, COX6A, COX6B, COX6C, COX7A, COX7B, COX7C, COX8 and NDUFA4, which are encoded in the nuclear genome. The complex exists as a monomer or a dimer and forms supercomplexes (SCs) in the inner mitochondrial membrane with NADH-ubiquinone oxidoreductase (complex I, CI) and ubiquinol-cytochrome c oxidoreductase (cytochrome b-c1 complex, complex III, CIII), resulting in different assemblies (supercomplex SCI(1)III(2)IV(1) and megacomplex MCI(2)III(2)IV(2)).

It is found in the mitochondrion inner membrane. It catalyses the reaction 4 Fe(II)-[cytochrome c] + O2 + 8 H(+)(in) = 4 Fe(III)-[cytochrome c] + 2 H2O + 4 H(+)(out). Functionally, component of the cytochrome c oxidase, the last enzyme in the mitochondrial electron transport chain which drives oxidative phosphorylation. The respiratory chain contains 3 multisubunit complexes succinate dehydrogenase (complex II, CII), ubiquinol-cytochrome c oxidoreductase (cytochrome b-c1 complex, complex III, CIII) and cytochrome c oxidase (complex IV, CIV), that cooperate to transfer electrons derived from NADH and succinate to molecular oxygen, creating an electrochemical gradient over the inner membrane that drives transmembrane transport and the ATP synthase. Cytochrome c oxidase is the component of the respiratory chain that catalyzes the reduction of oxygen to water. Electrons originating from reduced cytochrome c in the intermembrane space (IMS) are transferred via the dinuclear copper A center (CU(A)) of subunit 2 and heme A of subunit 1 to the active site in subunit 1, a binuclear center (BNC) formed by heme A3 and copper B (CU(B)). The BNC reduces molecular oxygen to 2 water molecules using 4 electrons from cytochrome c in the IMS and 4 protons from the mitochondrial matrix. This is Cytochrome c oxidase subunit 3 (MT-CO3) from Eudorcas thomsonii (Thomson's gazelle).